Reading from the N-terminus, the 213-residue chain is Protein RCR1 (213 aa).

Residues 1–39 (MGLISYENEAINEVKKADNHHVSKFVTSYYGPSSSSWQS) are Lumenal-facing. A helical transmembrane segment spans residues 40–62 (GIWILFVLFVAAVILIILFTFVA). Residues 63 to 213 (NRRRRRMGRA…PERAKVNARS (151 aa)) lie on the Cytoplasmic side of the membrane. The short motif at 104-107 (VPEY) is the PY motif element. Residues 190–213 (ERLPGGTTTQEINPPERAKVNARS) are disordered. Positions 203–213 (PPERAKVNARS) are enriched in basic and acidic residues.

As to quaternary structure, interacts with PMT4 and WW domain of RSP5.

The protein localises to the endoplasmic reticulum membrane. Regulates chitin deposition in the cell wall. This is Protein RCR1 (RCR1) from Saccharomyces cerevisiae (strain ATCC 204508 / S288c) (Baker's yeast).